The chain runs to 194 residues: MTVGVDEVGRGCLFGPVFAAAVSLTGAADAELTALGLTDSKALSAKRRADLVPHIQAKASAWALGQGSAREIDAHGIRVATELAMLRALQKLPIQPELVLVDGVLPLRLWPGAQRTIVRGDSQEASIAAASVLAKVARDGLMCRLAERFPEYGFERHAGYGTALHRQALITSGPTALHRKSFLTRLFPRDDGLR.

The RNase H type-2 domain maps to 1–194 (MTVGVDEVGR…RLFPRDDGLR (194 aa)). 3 residues coordinate a divalent metal cation: D6, E7, and D102.

Belongs to the RNase HII family. Requires Mn(2+) as cofactor. Mg(2+) serves as cofactor.

Its subcellular location is the cytoplasm. The catalysed reaction is Endonucleolytic cleavage to 5'-phosphomonoester.. Its function is as follows. Endonuclease that specifically degrades the RNA of RNA-DNA hybrids. In Synechococcus sp. (strain WH7803), this protein is Ribonuclease HII.